Consider the following 420-residue polypeptide: Gamma-glutamyl phosphate reductase (420 aa).

The protein belongs to the gamma-glutamyl phosphate reductase family.

The protein localises to the cytoplasm. It catalyses the reaction L-glutamate 5-semialdehyde + phosphate + NADP(+) = L-glutamyl 5-phosphate + NADPH + H(+). Its pathway is amino-acid biosynthesis; L-proline biosynthesis; L-glutamate 5-semialdehyde from L-glutamate: step 2/2. In terms of biological role, catalyzes the NADPH-dependent reduction of L-glutamate 5-phosphate into L-glutamate 5-semialdehyde and phosphate. The product spontaneously undergoes cyclization to form 1-pyrroline-5-carboxylate. The polypeptide is Gamma-glutamyl phosphate reductase (Neisseria meningitidis serogroup A / serotype 4A (strain DSM 15465 / Z2491)).